Reading from the N-terminus, the 122-residue chain is Large ribosomal subunit protein uL14 (122 aa).

The protein belongs to the universal ribosomal protein uL14 family. Part of the 50S ribosomal subunit. Forms a cluster with proteins L3 and L19. In the 70S ribosome, L14 and L19 interact and together make contacts with the 16S rRNA in bridges B5 and B8.

Functionally, binds to 23S rRNA. Forms part of two intersubunit bridges in the 70S ribosome. The polypeptide is Large ribosomal subunit protein uL14 (Rhodococcus erythropolis (strain PR4 / NBRC 100887)).